The chain runs to 252 residues: 5'-nucleotidase SurE (252 aa).

4 residues coordinate a divalent metal cation: aspartate 8, aspartate 9, serine 39, and asparagine 91.

This sequence belongs to the SurE nucleotidase family. Requires a divalent metal cation as cofactor.

The protein localises to the cytoplasm. It carries out the reaction a ribonucleoside 5'-phosphate + H2O = a ribonucleoside + phosphate. In terms of biological role, nucleotidase that shows phosphatase activity on nucleoside 5'-monophosphates. In Bordetella avium (strain 197N), this protein is 5'-nucleotidase SurE.